We begin with the raw amino-acid sequence, 400 residues long: Nicotinate phosphoribosyltransferase (400 aa).

The residue at position 220 (His-220) is a Phosphohistidine; by autocatalysis.

The protein belongs to the NAPRTase family. Transiently phosphorylated on a His residue during the reaction cycle. Phosphorylation strongly increases the affinity for substrates and increases the rate of nicotinate D-ribonucleotide production. Dephosphorylation regenerates the low-affinity form of the enzyme, leading to product release.

It catalyses the reaction nicotinate + 5-phospho-alpha-D-ribose 1-diphosphate + ATP + H2O = nicotinate beta-D-ribonucleotide + ADP + phosphate + diphosphate. Its pathway is cofactor biosynthesis; NAD(+) biosynthesis; nicotinate D-ribonucleotide from nicotinate: step 1/1. Its function is as follows. Catalyzes the synthesis of beta-nicotinate D-ribonucleotide from nicotinate and 5-phospho-D-ribose 1-phosphate at the expense of ATP. The protein is Nicotinate phosphoribosyltransferase of Citrobacter koseri (strain ATCC BAA-895 / CDC 4225-83 / SGSC4696).